The sequence spans 85 residues: MAHKKAGGSSRNGRDSNSKRLGVKRFGGELIPAGSIIIRQRGTRVHPGENVGMGKDHTLFAKVDGRVNFTVKGLPQRKTVSIIPA.

Positions 1–24 (MAHKKAGGSSRNGRDSNSKRLGVK) are disordered.

It belongs to the bacterial ribosomal protein bL27 family.

This Nitrosospira multiformis (strain ATCC 25196 / NCIMB 11849 / C 71) protein is Large ribosomal subunit protein bL27.